Consider the following 477-residue polypeptide: Cysteine--tRNA ligase (477 aa).

Residue Cys-29 participates in Zn(2+) binding. Positions 31–41 match the 'HIGH' region motif; that stretch reads PTVYDFAHIGN. The Zn(2+) site is built by Cys-224, His-249, and Glu-253. A 'KMSKS' region motif is present at residues 282–286; it reads KMSKS. Lys-285 contributes to the ATP binding site.

It belongs to the class-I aminoacyl-tRNA synthetase family. As to quaternary structure, monomer. Requires Zn(2+) as cofactor.

It localises to the cytoplasm. The enzyme catalyses tRNA(Cys) + L-cysteine + ATP = L-cysteinyl-tRNA(Cys) + AMP + diphosphate. In Nitrobacter winogradskyi (strain ATCC 25391 / DSM 10237 / CIP 104748 / NCIMB 11846 / Nb-255), this protein is Cysteine--tRNA ligase.